Consider the following 258-residue polypeptide: Probable enoyl-CoA hydratase (258 aa).

The protein belongs to the enoyl-CoA hydratase/isomerase family.

It carries out the reaction a (3S)-3-hydroxyacyl-CoA = a (2E)-enoyl-CoA + H2O. It catalyses the reaction a 4-saturated-(3S)-3-hydroxyacyl-CoA = a (3E)-enoyl-CoA + H2O. It functions in the pathway lipid metabolism; fatty acid beta-oxidation. Involved in the degradation of long-chain fatty acids. The chain is Probable enoyl-CoA hydratase (fadB) from Bacillus subtilis (strain 168).